The following is a 524-amino-acid chain: Light-independent protochlorophyllide reductase subunit B (524 aa).

Residue Asp36 participates in [4Fe-4S] cluster binding. Asp290 functions as the Proton donor in the catalytic mechanism. 425 to 426 (GL) serves as a coordination point for substrate.

The protein belongs to the ChlB/BchB/BchZ family. Protochlorophyllide reductase is composed of three subunits; ChlL, ChlN and ChlB. Forms a heterotetramer of two ChlB and two ChlN subunits. Requires [4Fe-4S] cluster as cofactor.

The catalysed reaction is chlorophyllide a + oxidized 2[4Fe-4S]-[ferredoxin] + 2 ADP + 2 phosphate = protochlorophyllide a + reduced 2[4Fe-4S]-[ferredoxin] + 2 ATP + 2 H2O. It participates in porphyrin-containing compound metabolism; chlorophyll biosynthesis (light-independent). Component of the dark-operative protochlorophyllide reductase (DPOR) that uses Mg-ATP and reduced ferredoxin to reduce ring D of protochlorophyllide (Pchlide) to form chlorophyllide a (Chlide). This reaction is light-independent. The NB-protein (ChlN-ChlB) is the catalytic component of the complex. The protein is Light-independent protochlorophyllide reductase subunit B of Parasynechococcus marenigrum (strain WH8102).